A 118-amino-acid polypeptide reads, in one-letter code: Large ribosomal subunit protein bL20 (118 aa).

The protein belongs to the bacterial ribosomal protein bL20 family.

In terms of biological role, binds directly to 23S ribosomal RNA and is necessary for the in vitro assembly process of the 50S ribosomal subunit. It is not involved in the protein synthesizing functions of that subunit. The protein is Large ribosomal subunit protein bL20 of Enterobacter sp. (strain 638).